Here is a 742-residue protein sequence, read N- to C-terminus: Phosphoribosylformylglycinamidine synthase subunit PurL (742 aa).

The active site involves H54. ATP contacts are provided by Y57 and K96. Residue E98 coordinates Mg(2+). Residues 99–102 (SHNH) and R121 contribute to the substrate site. H100 serves as the catalytic Proton acceptor. D122 lines the Mg(2+) pocket. Residue Q245 participates in substrate binding. Mg(2+) is bound at residue D273. Position 317-319 (317-319 (ESQ)) interacts with substrate. 2 residues coordinate ATP: D500 and G537. N538 lines the Mg(2+) pocket. Residue S540 participates in substrate binding.

This sequence belongs to the FGAMS family. As to quaternary structure, monomer. Part of the FGAM synthase complex composed of 1 PurL, 1 PurQ and 2 PurS subunits.

The protein localises to the cytoplasm. It carries out the reaction N(2)-formyl-N(1)-(5-phospho-beta-D-ribosyl)glycinamide + L-glutamine + ATP + H2O = 2-formamido-N(1)-(5-O-phospho-beta-D-ribosyl)acetamidine + L-glutamate + ADP + phosphate + H(+). Its pathway is purine metabolism; IMP biosynthesis via de novo pathway; 5-amino-1-(5-phospho-D-ribosyl)imidazole from N(2)-formyl-N(1)-(5-phospho-D-ribosyl)glycinamide: step 1/2. Part of the phosphoribosylformylglycinamidine synthase complex involved in the purines biosynthetic pathway. Catalyzes the ATP-dependent conversion of formylglycinamide ribonucleotide (FGAR) and glutamine to yield formylglycinamidine ribonucleotide (FGAM) and glutamate. The FGAM synthase complex is composed of three subunits. PurQ produces an ammonia molecule by converting glutamine to glutamate. PurL transfers the ammonia molecule to FGAR to form FGAM in an ATP-dependent manner. PurS interacts with PurQ and PurL and is thought to assist in the transfer of the ammonia molecule from PurQ to PurL. The polypeptide is Phosphoribosylformylglycinamidine synthase subunit PurL (Oceanobacillus iheyensis (strain DSM 14371 / CIP 107618 / JCM 11309 / KCTC 3954 / HTE831)).